Consider the following 123-residue polypeptide: Large ribosomal subunit protein bL17 (123 aa).

The protein belongs to the bacterial ribosomal protein bL17 family. In terms of assembly, part of the 50S ribosomal subunit. Contacts protein L32.

The protein is Large ribosomal subunit protein bL17 of Staphylococcus haemolyticus (strain JCSC1435).